Here is a 94-residue protein sequence, read N- to C-terminus: Small ribosomal subunit protein bS20 (94 aa).

Residues 1 to 10 are compositionally biased toward basic and acidic residues; it reads MANHASADKR. The disordered stretch occupies residues 1–20; it reads MANHASADKRNRQRITRTAR. Positions 11–20 are enriched in basic residues; it reads NRQRITRTAR.

Belongs to the bacterial ribosomal protein bS20 family.

In terms of biological role, binds directly to 16S ribosomal RNA. This is Small ribosomal subunit protein bS20 from Sorangium cellulosum (strain So ce56) (Polyangium cellulosum (strain So ce56)).